Consider the following 680-residue polypeptide: DNA-directed RNA polymerase subunit beta' (680 aa).

Positions 69, 71, 87, and 90 each coordinate Zn(2+). Residues Asp-489, Asp-491, and Asp-493 each contribute to the Mg(2+) site.

The protein belongs to the RNA polymerase beta' chain family. RpoC1 subfamily. In terms of assembly, in plastids the minimal PEP RNA polymerase catalytic core is composed of four subunits: alpha, beta, beta', and beta''. When a (nuclear-encoded) sigma factor is associated with the core the holoenzyme is formed, which can initiate transcription. It depends on Mg(2+) as a cofactor. Requires Zn(2+) as cofactor.

It is found in the plastid. Its subcellular location is the chloroplast. The enzyme catalyses RNA(n) + a ribonucleoside 5'-triphosphate = RNA(n+1) + diphosphate. DNA-dependent RNA polymerase catalyzes the transcription of DNA into RNA using the four ribonucleoside triphosphates as substrates. This is DNA-directed RNA polymerase subunit beta' from Carica papaya (Papaya).